The sequence spans 46 residues: Endochitinase 1A (46 aa).

The protein belongs to the glycosyl hydrolase 19 family. Chitinase class I subfamily.

It carries out the reaction Random endo-hydrolysis of N-acetyl-beta-D-glucosaminide (1-&gt;4)-beta-linkages in chitin and chitodextrins.. Functionally, defense against chitin-containing fungal and bacterial pathogens. This is Endochitinase 1A from Arachis hypogaea (Peanut).